We begin with the raw amino-acid sequence, 188 residues long: Methylamine dehydrogenase light chain (188 aa).

The segment at residues Met1–Ala57 is a signal peptide (tat-type signal). Cystine bridges form between Cys80/Cys145, Cys86/Cys118, Cys93/Cys178, Cys95/Cys143, Cys103/Cys134, and Cys135/Cys166. Trp114 bears the Tryptophylquinone mark. Residues Trp114–Trp165 constitute a cross-link (tryptophan tryptophylquinone (Trp-Trp)).

It belongs to the aromatic amine dehydrogenase light chain family. In terms of assembly, heterotetramer of two light and two heavy chains. Requires tryptophan tryptophylquinone residue as cofactor. Predicted to be exported by the Tat system. The position of the signal peptide cleavage has not been experimentally proven. In terms of processing, tryptophan tryptophylquinone (TTQ) is formed by oxidation of the indole ring of a tryptophan to form tryptophylquinone followed by covalent cross-linking with another tryptophan residue.

It is found in the periplasm. It carries out the reaction 2 oxidized [amicyanin] + methylamine + H2O = 2 reduced [amicyanin] + formaldehyde + NH4(+) + 2 H(+). It participates in one-carbon metabolism; methylamine degradation; formaldehyde from methylamine: step 1/1. Methylamine dehydrogenase carries out the oxidation of methylamine. Electrons are passed from methylamine dehydrogenase to amicyanin. In Paracoccus denitrificans, this protein is Methylamine dehydrogenase light chain (mauA).